The primary structure comprises 474 residues: tRNA-2-methylthio-N(6)-dimethylallyladenosine synthase (474 aa).

The region spanning 3–120 (KKLLIKTWGC…LPEMIKQSQS (118 aa)) is the MTTase N-terminal domain. [4Fe-4S] cluster is bound by residues Cys12, Cys49, Cys83, Cys157, Cys161, and Cys164. The Radical SAM core domain occupies 143 to 375 (RAEGATAFVS…QQQINAQAMR (233 aa)). Positions 378–441 (RLMLGTEQRV…ANSLRGEIVR (64 aa)) constitute a TRAM domain.

Belongs to the methylthiotransferase family. MiaB subfamily. In terms of assembly, monomer. Requires [4Fe-4S] cluster as cofactor.

Its subcellular location is the cytoplasm. It catalyses the reaction N(6)-dimethylallyladenosine(37) in tRNA + (sulfur carrier)-SH + AH2 + 2 S-adenosyl-L-methionine = 2-methylsulfanyl-N(6)-dimethylallyladenosine(37) in tRNA + (sulfur carrier)-H + 5'-deoxyadenosine + L-methionine + A + S-adenosyl-L-homocysteine + 2 H(+). In terms of biological role, catalyzes the methylthiolation of N6-(dimethylallyl)adenosine (i(6)A), leading to the formation of 2-methylthio-N6-(dimethylallyl)adenosine (ms(2)i(6)A) at position 37 in tRNAs that read codons beginning with uridine. This chain is tRNA-2-methylthio-N(6)-dimethylallyladenosine synthase, found in Vibrio vulnificus (strain YJ016).